A 519-amino-acid chain; its full sequence is MAGTPNFDRRSFLRLAAAAGLTGMAGVTSATPGRSPGPKKDEILVGVTSTADSPRKAVADAVPGNAEIVHENETLSYAAVKFPSKAPKQARENFISAITKRDEVKYAEKNATHEALYTANDPKYGSQYAPQQVNADSAWDTTLGSSSVKIAVVDQGVKYDHPDLSSQFGSNKGRDFVDNDGDPYPDLLSDEYHGTHVAGIAAGTTDNNEGIGGISNSTLLSGRALSESGSGSTSDIADAIEWAADQGADVINLSLGGGGYSSTMKNAVSYATQQGSLVVAAAGNDGRQSVSYPAAYSECVAVSALDPDETLASYSNYGSEIDLAAPGTNVLSCWTTSTEYNEISGTSMATPVVSGVAGLALAVHNLSPADLRNHLKNTAVDIGLSSTKQGSGRVDAANAVTTDPGDGGGGGGGGSKETTYDGTLSSSSDSNCVSHSWNYSSPSQVVIDLSGPSSADFDLYATEGSGTCPTTRSYDYRSWSYDSTEQIVIDNPDTSADLGILVDSYSGSGSYTVTITEKE.

Positions 1 to 27 (MAGTPNFDRRSFLRLAAAAGLTGMAGV) form a signal peptide, tat-type signal. Residues 28-116 (TSATPGRSPG…AEKNATHEAL (89 aa)) constitute a propeptide that is removed on maturation. The Peptidase S8 domain occupies 127–400 (QYAPQQVNAD…SGRVDAANAV (274 aa)). Catalysis depends on charge relay system residues Asp-154, His-193, and Ser-347. The interval 386–425 (STKQGSGRVDAANAVTTDPGDGGGGGGGGSKETTYDGTLS) is disordered. A compositionally biased stretch (gly residues) spans 405–415 (GDGGGGGGGGS).

This sequence belongs to the peptidase S8 family. Post-translationally, predicted to be exported by the Tat system. The position of the signal peptide cleavage has not been experimentally proven.

Its subcellular location is the secreted. Functionally, probable secreted halophilic serine protease showing proteolytic activity toward the protease general substrate azocasein. The sequence is that of Halolysin (hly) from Haloferax mediterranei (strain ATCC 33500 / DSM 1411 / JCM 8866 / NBRC 14739 / NCIMB 2177 / R-4) (Halobacterium mediterranei).